The chain runs to 108 residues: Nucleoid-associated protein Rmet_2128 (108 aa).

Residues 86–96 (TTQEKMGSMTS) are compositionally biased toward polar residues. Positions 86-108 (TTQEKMGSMTSGLPLPPGFKLPF) are disordered. A compositionally biased stretch (pro residues) spans 99–108 (PLPPGFKLPF).

It belongs to the YbaB/EbfC family. In terms of assembly, homodimer.

Its subcellular location is the cytoplasm. It is found in the nucleoid. Functionally, binds to DNA and alters its conformation. May be involved in regulation of gene expression, nucleoid organization and DNA protection. The sequence is that of Nucleoid-associated protein Rmet_2128 from Cupriavidus metallidurans (strain ATCC 43123 / DSM 2839 / NBRC 102507 / CH34) (Ralstonia metallidurans).